Here is a 317-residue protein sequence, read N- to C-terminus: Transmembrane and death domain protein 1 (317 aa).

A signal peptide spans 1–27 (MAARTLASALVLTLWVWALAPAGAVDA). Over 28–218 (MGPHAAVRLA…ERSPMGWAGP (191 aa)) the chain is Extracellular. Residues 62-73 (ELSRLSEDRLAR) show a composition bias toward basic and acidic residues. The tract at residues 62–106 (ELSRLSEDRLARPEPLNTTSGSPSRRRRREAAEDPAGRVAGPGEV) is disordered. Positions 66 to 150 (LSEDRLARPE…DVARELGKNL (85 aa)) constitute a Death domain. N-linked (GlcNAc...) asparagine glycosylation is present at asparagine 78. Residues 219–239 (LALGLLTGFVGALGTGALVVL) form a helical membrane-spanning segment. Topologically, residues 240 to 317 (LTLWITGGDG…SWGSGALDGL (78 aa)) are cytoplasmic.

Its subcellular location is the membrane. In Homo sapiens (Human), this protein is Transmembrane and death domain protein 1.